A 448-amino-acid polypeptide reads, in one-letter code: Phosphoglucosamine mutase (448 aa).

Ser102 serves as the catalytic Phosphoserine intermediate. Residues Ser102, Asp243, Asp245, and Asp247 each contribute to the Mg(2+) site. Ser102 carries the post-translational modification Phosphoserine.

It belongs to the phosphohexose mutase family. The cofactor is Mg(2+). Post-translationally, activated by phosphorylation.

It catalyses the reaction alpha-D-glucosamine 1-phosphate = D-glucosamine 6-phosphate. In terms of biological role, catalyzes the conversion of glucosamine-6-phosphate to glucosamine-1-phosphate. This chain is Phosphoglucosamine mutase, found in Parvibaculum lavamentivorans (strain DS-1 / DSM 13023 / NCIMB 13966).